The chain runs to 514 residues: 2,3-bisphosphoglycerate-independent phosphoglycerate mutase (514 aa).

2 residues coordinate Mn(2+): Asp-14 and Ser-64. Ser-64 (phosphoserine intermediate) is an active-site residue. Residues His-125, 155–156 (RD), Arg-187, Arg-193, 263–266 (RADR), and Lys-336 each bind substrate. Mn(2+)-binding residues include Asp-403, His-407, Asp-444, His-445, and His-463.

This sequence belongs to the BPG-independent phosphoglycerate mutase family. Monomer. Mn(2+) serves as cofactor.

The enzyme catalyses (2R)-2-phosphoglycerate = (2R)-3-phosphoglycerate. The protein operates within carbohydrate degradation; glycolysis; pyruvate from D-glyceraldehyde 3-phosphate: step 3/5. In terms of biological role, catalyzes the interconversion of 2-phosphoglycerate and 3-phosphoglycerate. The protein is 2,3-bisphosphoglycerate-independent phosphoglycerate mutase of Shewanella baltica (strain OS185).